Consider the following 375-residue polypeptide: Killer cell immunoglobulin-like receptor 2DL5A (375 aa).

A signal peptide spans M1 to T21. Residues H22–H238 lie on the Extracellular side of the membrane. 2 Ig-like C2-type domains span residues G42 to S102 and G137 to S200. A disulfide bond links C49 and C95. N139, N173, and N218 each carry an N-linked (GlcNAc...) asparagine glycan. Cysteines 144 and 193 form a disulfide. A disordered region spans residues V213–T233. Residues S219–S231 show a composition bias toward low complexity. A helical transmembrane segment spans residues L239 to L259. Residues L260 to I375 are Cytoplasmic-facing. The disordered stretch occupies residues A334–I375. Over residues R355–A366 the composition is skewed to polar residues.

This sequence belongs to the immunoglobulin superfamily.

Its subcellular location is the cell membrane. Receptor on natural killer (NK) cells for HLA-C alleles. Inhibits the activity of NK cells thus preventing cell lysis. The sequence is that of Killer cell immunoglobulin-like receptor 2DL5A (KIR2DL5A) from Homo sapiens (Human).